A 122-amino-acid polypeptide reads, in one-letter code: Large ribosomal subunit protein uL14 (122 aa).

The protein belongs to the universal ribosomal protein uL14 family. Part of the 50S ribosomal subunit. Forms a cluster with proteins L3 and L19. In the 70S ribosome, L14 and L19 interact and together make contacts with the 16S rRNA in bridges B5 and B8.

In terms of biological role, binds to 23S rRNA. Forms part of two intersubunit bridges in the 70S ribosome. In Pseudomonas fluorescens (strain ATCC BAA-477 / NRRL B-23932 / Pf-5), this protein is Large ribosomal subunit protein uL14.